Consider the following 1042-residue polypeptide: Diacylglycerol lipase-alpha (1042 aa).

The Cytoplasmic segment spans residues 1 to 22 (MPGIVVFRRRWSVGSDDLVLPA). The helical transmembrane segment at 23–43 (IFLFLLHTTWFVILSVVLFGL) threads the bilayer. Residues 44–60 (VYNPHEACSLNLVDHGR) lie on the Extracellular side of the membrane. The helical transmembrane segment at 61–81 (GYLGILLSCMIAEMAIIWLSM) threads the bilayer. At 82-101 (RGGILYTEPRDSMQYVLYVR) the chain is on the cytoplasmic side. The helical transmembrane segment at 102 to 122 (LAILVIEFIYAIVGIVWLTQY) threads the bilayer. Topologically, residues 123 to 136 (YTSCNDLTAKNVTL) are extracellular. The N-linked (GlcNAc...) asparagine glycan is linked to N133. A helical transmembrane segment spans residues 137-157 (GMVVCNWVVILSVCITVLCVF). The Cytoplasmic portion of the chain corresponds to 158-1042 (DPTGRTFVKL…KQDELVISAR (885 aa)). Active-site charge relay system residues include S472 and D524. Phosphoserine is present on residues S727, S729, S732, S743, S782, S784, S806, S808, S833, S847, and S952. Positions 846–903 (LSKHSQDTQPLEAALGSGGVTPERPPSAAANDEEEEVGGGGGGPASRGELALHNGRLG) are disordered. The tract at residues 1014–1042 (LAADKIRTSTPTGHGASPAKQDELVISAR) is disordered. At T1023 the chain carries Phosphothreonine.

The protein belongs to the AB hydrolase superfamily. Lipase family. As to quaternary structure, interacts (via C-terminal) with CAMK2A; leading to the phosphorylation and inhibition of DAGLA enzymatic activity. Interacts (via PPXXF motif) with HOMER1 and HOMER2; this interaction is required for DAGLA membrane localization. The cofactor is Ca(2+). In terms of processing, phosphorylated at Ser-782 and Ser-808 by CAMK2A; phosphorylation by CAMK2A inhibits diacylglycerol lipase activity. As to expression, highly expressed in brain and pancreas.

The protein localises to the cell membrane. Its subcellular location is the postsynaptic density membrane. It is found in the early endosome membrane. It localises to the cell projection. The protein resides in the dendritic spine membrane. It catalyses the reaction a 1,2-diacyl-sn-glycerol + H2O = a 2-acylglycerol + a fatty acid + H(+). It carries out the reaction 1-octadecanoyl-2-(5Z,8Z,11Z,14Z-eicosatetraenoyl)-sn-glycerol + H2O = 2-(5Z,8Z,11Z,14Z-eicosatetraenoyl)-glycerol + octadecanoate + H(+). The catalysed reaction is 1,2-di-(9Z-octadecenoyl)-sn-glycerol + H2O = 2-(9Z-octadecenoyl)-glycerol + (9Z)-octadecenoate + H(+). The enzyme catalyses 1-(9Z-octadecenoyl)-2-(5Z,8Z,11Z,14Z-eicosatetraenoyl)-sn-glycerol + H2O = 2-(5Z,8Z,11Z,14Z-eicosatetraenoyl)-glycerol + (9Z)-octadecenoate + H(+). It catalyses the reaction 1-(9Z-octadecenoyl)-2-octadecanoyl-sn-glycerol + H2O = 2-octadecanoylglycerol + (9Z)-octadecenoate + H(+). It carries out the reaction 1-(9Z-octadecenoyl)-2-(9Z,12Z-octadecadienoyl)-sn-glycerol + H2O = 2-(9Z,12Z-octadecadienoyl)-glycerol + (9Z)-octadecenoate + H(+). The catalysed reaction is 1-(9Z-octadecenoyl)-2-O-(5Z,8Z,11Z,14Z-eicosatetraenyl)-sn-glycerol + H2O = 2-O-(5Z,8Z,11Z,14Z)-eicosatetraenylglycerol + (9Z)-octadecenoate + H(+). Inhibited by 1,2,3-triazole urea covalent inhibitors KT172, DH376 and DO34. Inhibited by p-hydroxy-mercuri-benzoate and HgCl(2), but not to PMSF. Also inhibited by RHC80267. Diacylglycerol lipase activity is inhibited by the phosphorylation of Ser-782 and Ser-808 by CAMK2A. Serine hydrolase that hydrolyzes arachidonic acid-esterified diacylglycerols (DAGs) to produce the principal endocannabinoid, 2-arachidonoylglycerol (2-AG). Preferentially hydrolyzes sn-1 fatty acids from diacylglycerols (DAG) that contain arachidonic acid (AA) esterified at the sn-2 position to biosynthesize 2-AG. Has negligible activity against other lipids including monoacylglycerols and phospholipids. Plays a key role in regulating 2-AG signaling in the central nervous system (CNS). Regulates 2-AG involved in retrograde suppression at central synapses. Supports axonal growth during development and adult neurogenesis. Plays a role for eCB signaling in the physiological regulation of anxiety and depressive behaviors. Also regulates neuroinflammatory responses in the brain, in particular, LPS-induced microglial activation. The chain is Diacylglycerol lipase-alpha (DAGLA) from Homo sapiens (Human).